A 214-amino-acid chain; its full sequence is Redox-sensing transcriptional repressor Rex (214 aa).

The H-T-H motif DNA-binding region spans 17 to 56 (LYYRIFKRFHADQVEKASSKQIADAMGIDSATVRRDFSYF). 91 to 96 (GCGNIG) contacts NAD(+).

The protein belongs to the transcriptional regulatory Rex family. Homodimer.

Its subcellular location is the cytoplasm. Functionally, modulates transcription in response to changes in cellular NADH/NAD(+) redox state. This chain is Redox-sensing transcriptional repressor Rex, found in Streptococcus pyogenes serotype M1.